The following is a 321-amino-acid chain: Protein BIG GRAIN 1-like E (321 aa).

The tract at residues 134–217 (AGSKKNKSKS…PPPYLNTPTK (84 aa)) is disordered. Residues 135–147 (GSKKNKSKSKSKT) are compositionally biased toward basic residues. Residues 172-206 (ISHFFSSSRSTSTTTTTTASSSSKSLISSSSSGFR) are compositionally biased toward low complexity.

Belongs to the BIG GRAIN 1 (BG1) plant protein family.

The protein localises to the cell membrane. In terms of biological role, involved in auxin transport. Regulator of the auxin signaling pathway. In Arabidopsis thaliana (Mouse-ear cress), this protein is Protein BIG GRAIN 1-like E.